The sequence spans 123 residues: Large ribosomal subunit protein uL14c (123 aa).

Belongs to the universal ribosomal protein uL14 family. As to quaternary structure, part of the 50S ribosomal subunit.

It is found in the plastid. Its subcellular location is the chloroplast. Functionally, binds to 23S rRNA. The chain is Large ribosomal subunit protein uL14c from Triticum aestivum (Wheat).